Here is a 120-residue protein sequence, read N- to C-terminus: Ribosome-binding factor A (120 aa).

It belongs to the RbfA family. In terms of assembly, monomer. Binds 30S ribosomal subunits, but not 50S ribosomal subunits or 70S ribosomes.

The protein localises to the cytoplasm. In terms of biological role, one of several proteins that assist in the late maturation steps of the functional core of the 30S ribosomal subunit. Associates with free 30S ribosomal subunits (but not with 30S subunits that are part of 70S ribosomes or polysomes). Required for efficient processing of 16S rRNA. May interact with the 5'-terminal helix region of 16S rRNA. The sequence is that of Ribosome-binding factor A from Chlamydia felis (strain Fe/C-56) (Chlamydophila felis).